The sequence spans 717 residues: Delta-1-pyrroline-5-carboxylate synthase A (717 aa).

The interval 1 to 296 (MEELDRSRAF…WAPITDSNAR (296 aa)) is glutamate 5-kinase. Residues serine 60, aspartate 157, and asparagine 176 each coordinate substrate. ATP-binding positions include 196-197 (SD) and 236-242 (RGGMTAK). The gamma-glutamyl phosphate reductase stretch occupies residues 297-717 (DMAVAARESS…YTHQDIPIQA (421 aa)).

In the N-terminal section; belongs to the glutamate 5-kinase family. The protein in the C-terminal section; belongs to the gamma-glutamyl phosphate reductase family.

The enzyme catalyses L-glutamate + ATP = L-glutamyl 5-phosphate + ADP. The catalysed reaction is L-glutamate 5-semialdehyde + phosphate + NADP(+) = L-glutamyl 5-phosphate + NADPH + H(+). The protein operates within amino-acid biosynthesis; L-proline biosynthesis; L-glutamate 5-semialdehyde from L-glutamate: step 1/2. It participates in amino-acid biosynthesis; L-proline biosynthesis; L-glutamate 5-semialdehyde from L-glutamate: step 2/2. Functionally, P5CS plays a key role in proline biosynthesis, leading to osmoregulation in plants. In Arabidopsis thaliana (Mouse-ear cress), this protein is Delta-1-pyrroline-5-carboxylate synthase A (P5CSA).